The sequence spans 485 residues: Protein nucleotidyltransferase YdiU (485 aa).

The ATP site is built by Gly85, Gly87, Arg88, Lys108, Asp120, Gly121, Arg171, and Arg178. Asp249 functions as the Proton acceptor in the catalytic mechanism. Mg(2+) contacts are provided by Asn250 and Asp259. Asp259 contacts ATP. The tract at residues 462 to 485 is disordered; that stretch reads LPTTPNYQDPPADGDRSYQTFCGT.

It belongs to the SELO family. Mg(2+) is required as a cofactor. It depends on Mn(2+) as a cofactor.

It carries out the reaction L-seryl-[protein] + ATP = 3-O-(5'-adenylyl)-L-seryl-[protein] + diphosphate. It catalyses the reaction L-threonyl-[protein] + ATP = 3-O-(5'-adenylyl)-L-threonyl-[protein] + diphosphate. The catalysed reaction is L-tyrosyl-[protein] + ATP = O-(5'-adenylyl)-L-tyrosyl-[protein] + diphosphate. The enzyme catalyses L-histidyl-[protein] + UTP = N(tele)-(5'-uridylyl)-L-histidyl-[protein] + diphosphate. It carries out the reaction L-seryl-[protein] + UTP = O-(5'-uridylyl)-L-seryl-[protein] + diphosphate. It catalyses the reaction L-tyrosyl-[protein] + UTP = O-(5'-uridylyl)-L-tyrosyl-[protein] + diphosphate. Nucleotidyltransferase involved in the post-translational modification of proteins. It can catalyze the addition of adenosine monophosphate (AMP) or uridine monophosphate (UMP) to a protein, resulting in modifications known as AMPylation and UMPylation. The polypeptide is Protein nucleotidyltransferase YdiU (Teredinibacter turnerae (strain ATCC 39867 / T7901)).